We begin with the raw amino-acid sequence, 308 residues long: Mitoferrin (308 aa).

6 helical membrane-spanning segments follow: residues 13 to 29, 69 to 89, 111 to 131, 168 to 184, 213 to 233, and 285 to 302; these read GGSF…AGFA, ITGL…SHAV, IKVG…ASPM, YTTT…VYFA, LVAG…FDVV, and MVFH…YEYF. Solcar repeat units lie at residues 14-100, 108-192, and 207-305; these read GSFY…LKFK, HHPI…LKKI, and YQLI…FKFI.

It belongs to the mitochondrial carrier (TC 2.A.29) family.

The protein resides in the mitochondrion inner membrane. Functionally, mitochondrial solute carriers shuttle metabolites, nucleotides, and cofactors through the mitochondrial inner membrane. Mitochondrial iron transporter that mediates iron uptake. Probably required for heme synthesis of hemoproteins and Fe-S cluster assembly. This Dictyostelium discoideum (Social amoeba) protein is Mitoferrin (mcfF).